A 415-amino-acid polypeptide reads, in one-letter code: Serine hydroxymethyltransferase (415 aa).

(6S)-5,6,7,8-tetrahydrofolate-binding positions include Leu-117 and 121 to 123 (GHL). Position 226 is an N6-(pyridoxal phosphate)lysine (Lys-226). 349 to 351 (SPF) provides a ligand contact to (6S)-5,6,7,8-tetrahydrofolate.

Belongs to the SHMT family. In terms of assembly, homodimer. Pyridoxal 5'-phosphate serves as cofactor.

Its subcellular location is the cytoplasm. It catalyses the reaction (6R)-5,10-methylene-5,6,7,8-tetrahydrofolate + glycine + H2O = (6S)-5,6,7,8-tetrahydrofolate + L-serine. The protein operates within one-carbon metabolism; tetrahydrofolate interconversion. It functions in the pathway amino-acid biosynthesis; glycine biosynthesis; glycine from L-serine: step 1/1. Functionally, catalyzes the reversible interconversion of serine and glycine with tetrahydrofolate (THF) serving as the one-carbon carrier. This reaction serves as the major source of one-carbon groups required for the biosynthesis of purines, thymidylate, methionine, and other important biomolecules. Also exhibits THF-independent aldolase activity toward beta-hydroxyamino acids, producing glycine and aldehydes, via a retro-aldol mechanism. The chain is Serine hydroxymethyltransferase from Geobacter sp. (strain M21).